A 51-amino-acid chain; its full sequence is Large ribosomal subunit protein eL39-like (51 aa).

The protein belongs to the eukaryotic ribosomal protein eL39 family. In terms of assembly, component of a male germ cell-specific 60S large ribosomal subunit (LSU), which contains RPL10L and RPL39L, instead of RPL10 and RPL39 paralogs. The composition of the rest of the complex is similar to classical ribosomes. As to expression, highly expressed in spermatocytes and spermatids. Highly expressed in embryonic stem cells.

The protein localises to the cytoplasm. Its function is as follows. Male germ cell-specific component of the ribosome, which is required for the formation of sperm and male fertility. Replaces the RPL39 paralog in the ribosome of male germ cells. The ribosome is a large ribonucleoprotein complex responsible for the synthesis of proteins in the cell. The male germ cell-specific ribosome displays a ribosomal polypeptide exit tunnel of distinct size and charge states compared with the classical ribosome. It is responsible for regulating the biosynthesis and folding of a subset of male germ-cell-specific proteins that are essential for the formation of sperm. The sequence is that of Large ribosomal subunit protein eL39-like from Mus musculus (Mouse).